The sequence spans 310 residues: Ribonuclease Z (310 aa).

Positions 64, 66, 68, 69, 142, 213, and 271 each coordinate Zn(2+). Residue Asp-68 is the Proton acceptor of the active site.

It belongs to the RNase Z family. Homodimer. Zn(2+) serves as cofactor.

The catalysed reaction is Endonucleolytic cleavage of RNA, removing extra 3' nucleotides from tRNA precursor, generating 3' termini of tRNAs. A 3'-hydroxy group is left at the tRNA terminus and a 5'-phosphoryl group is left at the trailer molecule.. Zinc phosphodiesterase, which displays some tRNA 3'-processing endonuclease activity. Probably involved in tRNA maturation, by removing a 3'-trailer from precursor tRNA. This Treponema pallidum (strain Nichols) protein is Ribonuclease Z.